We begin with the raw amino-acid sequence, 212 residues long: ATP-dependent dethiobiotin synthetase BioD (212 aa).

13–18 (GIGKTV) contributes to the ATP binding site. Threonine 17 is a Mg(2+) binding site. Lysine 33 is an active-site residue. A Mg(2+)-binding site is contributed by glutamate 100. ATP contacts are provided by residues 100 to 103 (EGAG) and 184 to 186 (PHV).

The protein belongs to the dethiobiotin synthetase family. As to quaternary structure, homodimer. The cofactor is Mg(2+).

It localises to the cytoplasm. The catalysed reaction is (7R,8S)-7,8-diammoniononanoate + CO2 + ATP = (4R,5S)-dethiobiotin + ADP + phosphate + 3 H(+). The protein operates within cofactor biosynthesis; biotin biosynthesis; biotin from 7,8-diaminononanoate: step 1/2. In terms of biological role, catalyzes a mechanistically unusual reaction, the ATP-dependent insertion of CO2 between the N7 and N8 nitrogen atoms of 7,8-diaminopelargonic acid (DAPA, also called 7,8-diammoniononanoate) to form a ureido ring. In Nitrobacter hamburgensis (strain DSM 10229 / NCIMB 13809 / X14), this protein is ATP-dependent dethiobiotin synthetase BioD.